A 433-amino-acid polypeptide reads, in one-letter code: tRNA-2-methylthio-N(6)-dimethylallyladenosine synthase (433 aa).

Residues 3-118 enclose the MTTase N-terminal domain; the sequence is KKLFIQTLGC…ISTAVKTPKF (116 aa). 6 residues coordinate [4Fe-4S] cluster: Cys-12, Cys-49, Cys-81, Cys-150, Cys-154, and Cys-157. Residues 136–369 enclose the Radical SAM core domain; sequence RGSPYKSHIN…QSRHNEILDE (234 aa). The 62-residue stretch at 372–433 folds into the TRAM domain; it reads AAQEGKILDV…RMVLYGELAN (62 aa).

This sequence belongs to the methylthiotransferase family. MiaB subfamily. As to quaternary structure, monomer. [4Fe-4S] cluster is required as a cofactor.

It localises to the cytoplasm. It carries out the reaction N(6)-dimethylallyladenosine(37) in tRNA + (sulfur carrier)-SH + AH2 + 2 S-adenosyl-L-methionine = 2-methylsulfanyl-N(6)-dimethylallyladenosine(37) in tRNA + (sulfur carrier)-H + 5'-deoxyadenosine + L-methionine + A + S-adenosyl-L-homocysteine + 2 H(+). In terms of biological role, catalyzes the methylthiolation of N6-(dimethylallyl)adenosine (i(6)A), leading to the formation of 2-methylthio-N6-(dimethylallyl)adenosine (ms(2)i(6)A) at position 37 in tRNAs that read codons beginning with uridine. This Campylobacter curvus (strain 525.92) protein is tRNA-2-methylthio-N(6)-dimethylallyladenosine synthase.